The sequence spans 396 residues: Phosphopentomutase (396 aa).

Asp-14, Asp-286, His-291, Asp-327, His-328, and His-339 together coordinate Mn(2+).

Belongs to the phosphopentomutase family. Mn(2+) serves as cofactor.

The protein resides in the cytoplasm. The catalysed reaction is 2-deoxy-alpha-D-ribose 1-phosphate = 2-deoxy-D-ribose 5-phosphate. The enzyme catalyses alpha-D-ribose 1-phosphate = D-ribose 5-phosphate. Its pathway is carbohydrate degradation; 2-deoxy-D-ribose 1-phosphate degradation; D-glyceraldehyde 3-phosphate and acetaldehyde from 2-deoxy-alpha-D-ribose 1-phosphate: step 1/2. Its function is as follows. Isomerase that catalyzes the conversion of deoxy-ribose 1-phosphate (dRib-1-P) and ribose 1-phosphate (Rib-1-P) to deoxy-ribose 5-phosphate (dRib-5-P) and ribose 5-phosphate (Rib-5-P), respectively. The sequence is that of Phosphopentomutase from Staphylococcus epidermidis (strain ATCC 35984 / DSM 28319 / BCRC 17069 / CCUG 31568 / BM 3577 / RP62A).